A 312-amino-acid chain; its full sequence is uncharacterized protein (312 aa).

Residues 1–14 (MSIVETCISFVSTN) are Extracellular-facing. Residues 15–35 (PFYPFCTGLLLNCVVTPLYFW) traverse the membrane as a helical segment. The Cytoplasmic portion of the chain corresponds to 36 to 41 (KTQNGR). A helical transmembrane segment spans residues 42–62 (IVVVSLLQFVVLYATAFISIG). At 63-179 (TDKSLYRNKW…LEYDQDTATE (117 aa)) the chain is on the extracellular side. Residues 70 to 173 (NKWVALPLSK…KGPLGELEYD (104 aa)) form the FAD-binding FR-type domain. A helical membrane pass occupies residues 180-200 (LGIIAGGSGITPVLQVLQEII). Residues 201-312 (PSPEDLTHIS…GNGTDKVFVF (112 aa)) are Cytoplasmic-facing.

This sequence belongs to the flavoprotein pyridine nucleotide cytochrome reductase family. Requires FAD as cofactor.

It is found in the membrane. This is an uncharacterized protein from Saccharomyces cerevisiae (strain ATCC 204508 / S288c) (Baker's yeast).